The following is a 495-amino-acid chain: GTPase Der (495 aa).

EngA-type G domains lie at 3–166 (PVIA…MDAE) and 208–381 (IKLA…DCST). GTP contacts are provided by residues 9–16 (GRPNVGKS), 56–60 (DTGGI), 118–121 (NKTD), 214–221 (GRPNVGKS), 261–265 (DTAGV), and 326–329 (NKWD). In terms of domain architecture, KH-like spans 382–466 (KRVGTSLLTR…PIRIQFKEGE (85 aa)).

It belongs to the TRAFAC class TrmE-Era-EngA-EngB-Septin-like GTPase superfamily. EngA (Der) GTPase family. In terms of assembly, associates with the 50S ribosomal subunit.

Its function is as follows. GTPase that plays an essential role in the late steps of ribosome biogenesis. The chain is GTPase Der from Yersinia pseudotuberculosis serotype O:3 (strain YPIII).